A 59-amino-acid chain; its full sequence is Large ribosomal subunit protein bL32 (59 aa).

A disordered region spans residues 1 to 20 (MAVQQNKKSRSRKGMRRSHD). Over residues 7-19 (KKSRSRKGMRRSH) the composition is skewed to basic residues.

This sequence belongs to the bacterial ribosomal protein bL32 family.

The polypeptide is Large ribosomal subunit protein bL32 (Nitratidesulfovibrio vulgaris (strain ATCC 29579 / DSM 644 / CCUG 34227 / NCIMB 8303 / VKM B-1760 / Hildenborough) (Desulfovibrio vulgaris)).